We begin with the raw amino-acid sequence, 100 residues long: MAALTKADMAERLYEELGLNKREAKEMVEAFFDEIRGALSHNEQVKLSGFGNFDLRDKKQRPGRNPKTGEEIPISARRVVTFRPGQKLKQKVEAYAGTQS.

The disordered stretch occupies residues F53–I72.

It belongs to the bacterial histone-like protein family. As to quaternary structure, heterodimer of an alpha and a beta chain.

In terms of biological role, this protein is one of the two subunits of integration host factor, a specific DNA-binding protein that functions in genetic recombination as well as in transcriptional and translational control. This chain is Integration host factor subunit alpha, found in Marinobacter nauticus (strain ATCC 700491 / DSM 11845 / VT8) (Marinobacter aquaeolei).